A 276-amino-acid chain; its full sequence is Large ribosomal subunit protein uL2 (276 aa).

The interval 219–268 is disordered; it reads TVRGSVMNPNDHPHGGGEGRQPVGRKSPMTPWGKPALGLKTRNKKAKSSK.

The protein belongs to the universal ribosomal protein uL2 family. As to quaternary structure, part of the 50S ribosomal subunit. Forms a bridge to the 30S subunit in the 70S ribosome.

Its function is as follows. One of the primary rRNA binding proteins. Required for association of the 30S and 50S subunits to form the 70S ribosome, for tRNA binding and peptide bond formation. It has been suggested to have peptidyltransferase activity; this is somewhat controversial. Makes several contacts with the 16S rRNA in the 70S ribosome. The chain is Large ribosomal subunit protein uL2 from Lactococcus lactis subsp. lactis (strain IL1403) (Streptococcus lactis).